The sequence spans 197 residues: Rac-like GTP-binding protein 5 (197 aa).

13–20 (GDGAVGKT) lines the GTP pocket. Positions 35–43 (YVPTVFDNF) match the Effector region motif. GTP contacts are provided by residues 60–64 (DTAGQ) and 118–121 (TKLD). Cysteine methyl ester is present on Cys-194. Cys-194 carries the S-geranylgeranyl cysteine lipid modification. Positions 195 to 197 (AIL) are cleaved as a propeptide — removed in mature form.

It belongs to the small GTPase superfamily. Rho family.

Its subcellular location is the cytoplasm. The protein localises to the membrane. Inactive GDP-bound Rho GTPases reside in the cytosol, are found in a complex with Rho GDP-dissociation inhibitors (Rho GDIs), and are released from the GDI protein in order to translocate to membranes upon activation. The sequence is that of Rac-like GTP-binding protein 5 (RAC5) from Oryza sativa subsp. japonica (Rice).